Consider the following 614-residue polypeptide: ATP-dependent rRNA helicase SPB4 (614 aa).

The Q motif signature appears at 10-38; that stretch reads WSVLKCDLHPWIKEAIKSLGYPTMTPVQA. A Helicase ATP-binding domain is found at 41–233; sequence IPLFSGNKDV…RTGMANPVKI (193 aa). Position 54-61 (54-61) interacts with ATP; sequence AVTGSGKT. The short motif at 181–184 is the DEAD box element; that stretch reads DEAD. The 172-residue stretch at 260-431 folds into the Helicase C-terminal domain; the sequence is KISALIALIK…KFQKKFRKYM (172 aa). Residues 510–581 are a coiled coil; the sequence is EYADKQKEES…IEKQLMDDSS (72 aa). Basic and acidic residues predominate over residues 514-529; that stretch reads KQKEESRKKNLEEDKA. The disordered stretch occupies residues 514 to 614; that stretch reads KQKEESRKKN…DSMQGSFDDL (101 aa). A compositionally biased stretch (basic residues) spans 530-541; the sequence is RKVHDAKKRKEL. Basic and acidic residues-rich tracts occupy residues 551–563 and 584–595; these read KTDK…ERRE and EETKVDWKEMVK. Residues 604–614 show a composition bias toward polar residues; that stretch reads SDSMQGSFDDL.

This sequence belongs to the DEAD box helicase family. DDX55/SPB4 subfamily. As to quaternary structure, component of pre-60S ribosomal complexes.

It localises to the nucleus. The protein resides in the nucleolus. It carries out the reaction ATP + H2O = ADP + phosphate + H(+). In terms of biological role, ATP-binding RNA helicase involved in the biogenesis of 60S ribosomal subunits. Binds 90S pre-ribosomal particles and dissociates from pre-60S ribosomal particles after processing of 27SB pre-rRNA. Required for the normal formation of 18S rRNA through the processing of pre-rRNAs at sites A0, A1 and A2, and the normal formation of 25S and 5.8S rRNAs through the processing of pre-rRNAs at sites C1 and C2. The chain is ATP-dependent rRNA helicase SPB4 from Debaryomyces hansenii (strain ATCC 36239 / CBS 767 / BCRC 21394 / JCM 1990 / NBRC 0083 / IGC 2968) (Yeast).